The sequence spans 186 residues: Casparian strip membrane protein 1 (186 aa).

Residues 1 to 26 are Cytoplasmic-facing; sequence MKSSPAELISEAKSSTQNSKMKRAVS. Residues 27 to 47 form a helical membrane-spanning segment; the sequence is VLDFILRLIAVVATLASAIAM. Residues 48-74 lie on the Extracellular side of the membrane; sequence GTTDESLPFFTQFIRFRAEYDDLPTLR. A helical transmembrane segment spans residues 75–95; sequence LFVVASAFASGYLILSLPLSI. The Cytoplasmic segment spans residues 96 to 107; it reads LHITRSSARRTR. Residues 108–128 form a helical membrane-spanning segment; sequence VILIILDMVMLTSLTAASSAA. The Extracellular portion of the chain corresponds to 129–161; that stretch reads AAIVYLAHKGNAKANWFAFCQQYDSFCERISGS. A helical membrane pass occupies residues 162–182; the sequence is LIGSFIAIPLFIMLILFSALV. The Cytoplasmic portion of the chain corresponds to 183–186; sequence LSKR.

Belongs to the Casparian strip membrane proteins (CASP) family. Homodimer and heterodimers.

The protein resides in the cell membrane. Its function is as follows. Regulates membrane-cell wall junctions and localized cell wall deposition. Required for establishment of the Casparian strip membrane domain (CSD) and the subsequent formation of Casparian strips, a cell wall modification of the root endodermis that determines an apoplastic barrier between the intraorganismal apoplasm and the extraorganismal apoplasm and prevents lateral diffusion. In Lotus japonicus (Lotus corniculatus var. japonicus), this protein is Casparian strip membrane protein 1.